The following is a 203-amino-acid chain: Dephospho-CoA kinase (203 aa).

One can recognise a DPCK domain in the interval 5–203 (IVGLTGGIAS…VVYRVAASEH (199 aa)). Position 13 to 18 (13 to 18 (ASGKSA)) interacts with ATP.

The protein belongs to the CoaE family.

The protein resides in the cytoplasm. It catalyses the reaction 3'-dephospho-CoA + ATP = ADP + CoA + H(+). Its pathway is cofactor biosynthesis; coenzyme A biosynthesis; CoA from (R)-pantothenate: step 5/5. Functionally, catalyzes the phosphorylation of the 3'-hydroxyl group of dephosphocoenzyme A to form coenzyme A. The chain is Dephospho-CoA kinase from Xanthomonas euvesicatoria pv. vesicatoria (strain 85-10) (Xanthomonas campestris pv. vesicatoria).